The chain runs to 525 residues: Protein nucleotidyltransferase YdiU (525 aa).

Residues Gly-107, Gly-109, Arg-110, Lys-129, Asp-141, Gly-142, Arg-192, and Arg-199 each coordinate ATP. Asp-268 (proton acceptor) is an active-site residue. The Mg(2+) site is built by Asn-269 and Asp-278. Asp-278 lines the ATP pocket.

This sequence belongs to the SELO family. Mg(2+) serves as cofactor. Requires Mn(2+) as cofactor.

The enzyme catalyses L-seryl-[protein] + ATP = 3-O-(5'-adenylyl)-L-seryl-[protein] + diphosphate. It catalyses the reaction L-threonyl-[protein] + ATP = 3-O-(5'-adenylyl)-L-threonyl-[protein] + diphosphate. The catalysed reaction is L-tyrosyl-[protein] + ATP = O-(5'-adenylyl)-L-tyrosyl-[protein] + diphosphate. It carries out the reaction L-histidyl-[protein] + UTP = N(tele)-(5'-uridylyl)-L-histidyl-[protein] + diphosphate. The enzyme catalyses L-seryl-[protein] + UTP = O-(5'-uridylyl)-L-seryl-[protein] + diphosphate. It catalyses the reaction L-tyrosyl-[protein] + UTP = O-(5'-uridylyl)-L-tyrosyl-[protein] + diphosphate. Nucleotidyltransferase involved in the post-translational modification of proteins. It can catalyze the addition of adenosine monophosphate (AMP) or uridine monophosphate (UMP) to a protein, resulting in modifications known as AMPylation and UMPylation. The chain is Protein nucleotidyltransferase YdiU from Ralstonia nicotianae (strain ATCC BAA-1114 / GMI1000) (Ralstonia solanacearum).